The following is a 37-amino-acid chain: Large ribosomal subunit protein bL36 (37 aa).

The protein belongs to the bacterial ribosomal protein bL36 family.

The sequence is that of Large ribosomal subunit protein bL36 from Synechococcus sp. (strain CC9605).